A 101-amino-acid chain; its full sequence is Replication restart protein PriB (101 aa).

Residues 1–101 enclose the SSB domain; the sequence is MTTNNLVLSG…IHAENVELKT (101 aa).

The protein belongs to the PriB family. As to quaternary structure, homodimer. Interacts with PriA and DnaT. Component of the replication restart primosome. Primosome assembly occurs via a 'hand-off' mechanism. PriA binds to replication forks, subsequently PriB then DnaT bind; DnaT then displaces ssDNA to generate the helicase loading substrate.

Involved in the restart of stalled replication forks, which reloads the replicative helicase on sites other than the origin of replication; the PriA-PriB pathway is the major replication restart pathway. During primosome assembly it facilitates complex formation between PriA and DnaT on DNA; stabilizes PriA on DNA. Stimulates the DNA unwinding activity of PriA helicase. The sequence is that of Replication restart protein PriB from Shewanella baltica (strain OS223).